A 356-amino-acid chain; its full sequence is 3-isopropylmalate dehydrogenase (356 aa).

The substrate site is built by Arg-95, Arg-105, Arg-133, and Asp-223. Mg(2+)-binding residues include Asp-223, Asp-247, and Asp-251. NAD(+) is bound at residue Gly-281–Asn-293.

Belongs to the isocitrate and isopropylmalate dehydrogenases family. LeuB type 1 subfamily. Homodimer. Mg(2+) serves as cofactor. The cofactor is Mn(2+).

The protein resides in the cytoplasm. The catalysed reaction is (2R,3S)-3-isopropylmalate + NAD(+) = 4-methyl-2-oxopentanoate + CO2 + NADH. It participates in amino-acid biosynthesis; L-leucine biosynthesis; L-leucine from 3-methyl-2-oxobutanoate: step 3/4. Catalyzes the oxidation of 3-carboxy-2-hydroxy-4-methylpentanoate (3-isopropylmalate) to 3-carboxy-4-methyl-2-oxopentanoate. The product decarboxylates to 4-methyl-2 oxopentanoate. The protein is 3-isopropylmalate dehydrogenase of Neisseria meningitidis serogroup A / serotype 4A (strain DSM 15465 / Z2491).